Here is a 29-residue protein sequence, read N- to C-terminus: Trypsin inhibitor 3 (29 aa).

Disulfide bonds link Cys-3–Cys-20, Cys-10–Cys-22, and Cys-16–Cys-28.

This sequence belongs to the protease inhibitor I7 (squash-type serine protease inhibitor) family.

The protein localises to the secreted. In terms of biological role, inhibits trypsin. In Luffa aegyptiaca (Sponge gourd), this protein is Trypsin inhibitor 3.